The chain runs to 148 residues: MKIQIIAVGTIKENYIKDGIKFYLDKLKKIYDIEIVEIKEEEDPGTPASREKVLETEGERILYKIDRESFVIALAIEGKEVSTEEFASLVKKAFGMGYKKVVFVIGGSLGIWGKVKERADVNISFSKMTFPHQLTRLLLLEQIYYALL.

Residues leucine 74, glycine 106, and 125 to 130 (FSKMTF) contribute to the S-adenosyl-L-methionine site.

Belongs to the RNA methyltransferase RlmH family. In terms of assembly, homodimer.

The protein resides in the cytoplasm. The enzyme catalyses pseudouridine(1915) in 23S rRNA + S-adenosyl-L-methionine = N(3)-methylpseudouridine(1915) in 23S rRNA + S-adenosyl-L-homocysteine + H(+). Specifically methylates the pseudouridine at position 1915 (m3Psi1915) in 23S rRNA. This is Ribosomal RNA large subunit methyltransferase H 2 from Caldanaerobacter subterraneus subsp. tengcongensis (strain DSM 15242 / JCM 11007 / NBRC 100824 / MB4) (Thermoanaerobacter tengcongensis).